The following is a 182-amino-acid chain: Peptide deformylase (182 aa).

The Fe cation site is built by C100 and H142. The active site involves E143. Position 146 (H146) interacts with Fe cation.

The protein belongs to the polypeptide deformylase family. It depends on Fe(2+) as a cofactor.

It catalyses the reaction N-terminal N-formyl-L-methionyl-[peptide] + H2O = N-terminal L-methionyl-[peptide] + formate. In terms of biological role, removes the formyl group from the N-terminal Met of newly synthesized proteins. Requires at least a dipeptide for an efficient rate of reaction. N-terminal L-methionine is a prerequisite for activity but the enzyme has broad specificity at other positions. The sequence is that of Peptide deformylase from Bartonella bacilliformis (strain ATCC 35685 / KC583 / Herrer 020/F12,63).